We begin with the raw amino-acid sequence, 191 residues long: Vascular endothelial growth factor A (191 aa).

The first 26 residues, 1-26, serve as a signal peptide directing secretion; sequence MNFLLTWIHWGLAALLYFHNAKVLQA. 3 cysteine pairs are disulfide-bonded: Cys52/Cys94, Cys83/Cys128, and Cys87/Cys130. Asn101 is a glycosylation site (N-linked (GlcNAc...) asparagine).

This sequence belongs to the PDGF/VEGF growth factor family. Homodimer; disulfide-linked. Also found as heterodimer with PGF. As to expression, expressed by the venom gland, and probably other tissues.

It localises to the secreted. Growth factor active in angiogenesis, vasculogenesis and endothelial cell growth. Induces endothelial cell proliferation, promotes cell migration, inhibits apoptosis and induces permeabilization of blood vessels. Binds to heparan sulfate and heparin. The chain is Vascular endothelial growth factor A from Bitis gabonica (Gaboon adder).